Here is a 398-residue protein sequence, read N- to C-terminus: Lymphocyte transmembrane adapter 1 (398 aa).

Residues 1–37 are Extracellular-facing; the sequence is MDGVTPTLSTIRGRTLESSTLHVTPRSLDRNKDQITN. Residues 38-58 traverse the membrane as a helical; Signal-anchor for type III membrane protein segment; it reads IFSGFAGLLAILLVVAVFCIL. At 59–398 the chain is on the cytoplasmic side; sequence WNWNKRKKRQ…GPGTQLLPDE (340 aa). The residue at position 193 (Tyr193) is a Phosphotyrosine. Positions 228–261 are disordered; the sequence is TEERDEGCGDAGDCTSLYSPGAEDSDSLSNGEGS. A phosphotyrosine mark is found at Tyr268 and Tyr294. The segment at 298–330 is disordered; it reads PAADPSGSQQQAEKDVPSSNIGHVEDKTDDPGT. Polar residues predominate over residues 303-318; the sequence is SGSQQQAEKDVPSSNI. Over residues 320–329 the composition is skewed to basic and acidic residues; it reads HVEDKTDDPG. Tyr345 and Tyr373 each carry phosphotyrosine. Residues 347–398 are disordered; it reads DFQPFTQSEDSQMKHREEMSNEDSSDYENVLTAKLGGRDSEQGPGTQLLPDE.

As to quaternary structure, when phosphorylated, interacts with GRB2, PIK3R1 and GRAP2. Phosphorylated on tyrosines by Syk, Lck or ZAP70 upon TCR or BCR activation; which leads to the recruitment of GRB2, PIK3R1 and GRAP2. In terms of tissue distribution, expressed in spleen, thymus, and peripheral blood leukocytes. Expressed in several B-, T-, NK and monocyte cell lines.

Its subcellular location is the cell membrane. In terms of biological role, negatively regulates TCR (T-cell antigen receptor)-mediated signaling in T-cells and BCR (B-cell antigen receptor)-mediated signaling in B-cells. The protein is Lymphocyte transmembrane adapter 1 (LAX1) of Homo sapiens (Human).